Reading from the N-terminus, the 536-residue chain is Multifunctional cytochrome P450 monooxygenase af510 (536 aa).

The helical transmembrane segment at 4–24 threads the bilayer; sequence ELSTLQLSCVAFVAFMAVLVF. N-linked (GlcNAc...) asparagine glycans are attached at residues Asn-210 and Asn-293. Cys-448 is a binding site for heme.

It belongs to the cytochrome P450 family. Heme is required as a cofactor.

Its subcellular location is the membrane. It catalyses the reaction (+)-exo-beta-bergamotene + 2 reduced [NADPH--hemoprotein reductase] + 3 O2 = 5-dehydro-6-demethoxyfumagillol + 2 oxidized [NADPH--hemoprotein reductase] + 3 H2O + 2 H(+). Its pathway is secondary metabolite biosynthesis; terpenoid biosynthesis. Functionally, multifunctional cytochrome P450 monooxygenase; part of the gene cluster that mediates the biosynthesis of fumagillin, a meroterpenoid that has numerous biological activities including irreversible inhibition of human type 2 methionine aminopeptidase (METAP2). Within the pathway, the multifunctional cytochrome P450 monooxygenase af510 acts as a 2,4,6-trichlorophenol monooxygenase that first performs the C-H hydroxylation at the bridgehead C5 position to yield 5R-hydroxyl-beta-trans-bergamotene. Subsequently, a four electron oxidation initiated at C-9 coupled to cleavage of the cyclobutane C5-C8 bond of the bicyclo[3.1.1] core yields the epoxyketone intermediate 5-keto-cordycol. An additional epoxidation reaction also catalyzed by af510 then furnishes the characteristic bisepoxide ketone 5-keto-demethoxyfumagillol. The pathway begins with the conversion of farnesyl pyrophosphate (FPP) to beta-trans-bergamotene by the membrane-bound beta-trans-bergamotene synthase af520. The multifunctional cytochrome P450 monooxygenase af510 then converts beta-trans-bergamotene into 5-keto-demethoxyfumagillol via several oxydation steps. 5-keto-demethoxyfumagillol is then subjected to successive C-6 hydroxylation and O-methylation by the dioxygenase af480 and O-methyltransferase af390-400, respectively, to yield 5-keto-fumagillol, which is then stereoselectively reduced by the keto-reductase af490 to 5R-hydroxy-seco-sesquiterpene. The next step is the polyketide transferase af380-catalyzed transfer of a dodecapentaenoyl group synthesized by the polyketide synthase af370 onto 5R-hydroxy-seco-sesquiterpene which leads to the production of prefumagillin. Finally, oxidative cleavage by the monooxygenase af470 converts prefumagillin to fumagillin. This chain is Multifunctional cytochrome P450 monooxygenase af510, found in Aspergillus fumigatus (strain ATCC MYA-4609 / CBS 101355 / FGSC A1100 / Af293) (Neosartorya fumigata).